The primary structure comprises 401 residues: Homeobox protein engrailed-1 (401 aa).

Disordered regions lie at residues 1-102 (MEEQ…PAAQ), 138-167 (GGGA…HSLG), 229-253 (SKPS…AKFP), and 293-315 (RPSS…DKRP). The segment covering 13–48 (DSGLGAVAAAAPSGLSLSLSPGASGSSGSDGDSVPV) has biased composition (low complexity). 2 stretches are compositionally biased toward pro residues: residues 49 to 64 (SPQP…PCLP) and 73 to 88 (PPHP…PPPQ). Residues 89-102 (HLAAPAHQPQPAAQ) show a composition bias toward low complexity. 2 stretches are compositionally biased toward gly residues: residues 138–147 (GGGAAAGGGS) and 234–243 (SGGGSGGNAG). The segment at residues 312–371 (DKRPRTAFTAEQLQRLKAEFQANRYITEQRRQTLAQELSLNESQIKIWFQNKRAKIKKAT) is a DNA-binding region (homeobox).

Belongs to the engrailed homeobox family.

It localises to the nucleus. Required for proper formation of the apical ectodermal ridge and correct dorsal-ventral patterning in the limb. The polypeptide is Homeobox protein engrailed-1 (En1) (Mus musculus (Mouse)).